The following is a 446-amino-acid chain: MFHISTLDQIKIAYIGGGSQGWARSLMSDLSIDERMSGTVALYDLDFEAAQKNEVIGNHSGNGRWRYEAVSTLKKALSAADIVIISILPGSLDDMEVDVHLPERCGIYQSVGDTVGPGGIIRGLRAVPIFAEIARAIRDYAPESWVINYTNPMSVCTRVLYKVFPGIKAIGCCHEVFGTQKLLAEMVTERLGIEVPRREDIRVNVLGINHFTWITKASYRHIDLLPIFREFSAHYGESGYELEGECWRDSVFCSAHRVAFDLFETYGAIPAAGDRHLAEFLPGPYLKQPEVWKFHLTPISFRKQDRAEKRQETERLIVQQRGVAEKASGEEGVNIIAALLGLGELVTNVNMPNQGQVLNLPIQAIVETNAFITRNRVQPILSGALPKGVEMLAARHISNQEAVADAGLTKDTGLAFQAFLNDPLVQIDRSDAEQLFNDMLQCIMQS.

Position 10–72 (10–72 (IKIAYIGGGS…GRWRYEAVST (63 aa))) interacts with NAD(+). Position 151 (N151) interacts with substrate. Residue C173 coordinates Mn(2+). The Proton donor role is filled by H174. H210 lines the Mn(2+) pocket.

It belongs to the glycosyl hydrolase 4 family. Homotetramer. Requires NAD(+) as cofactor. The cofactor is Mn(2+).

It carries out the reaction [(1-&gt;4)-alpha-D-galacturonosyl](n) + H2O = alpha-D-galacturonate + [(1-&gt;4)-alpha-D-galacturonosyl](n-1). In terms of biological role, alpha-galacturonidase able to catalyze the hydrolysis of the chromogenic substrate p-nitrophenyl-alpha-D-galacturonic acid (pNPalphaGalUA), and of the probable natural substrate alpha-1,4-di-galacturonate (GalUA(2)). Can neither hydrolyze pNPbetaGalUA, nor the stereoisomeric pNPalphaGlcUA. Does not display alpha- or beta-glucosidase activity as it fails to hydrolyze melibiose, raffinose, lactose and the chromogenic analogs, pNPalphaGal and pNPbetaGal. Cannot use the following compounds as substrates: pNP-N-acetyl-alpha- and beta-D-galactosaminide, pNP-N-acetyl-alpha- and beta-D-glucosaminide, pNP-alpha-L- and beta-L-arabinopyranoside, pNP-alpha- and beta-D-glucuronide, pNP-alpha- and beta-D-glucopyranoside, pNP-alpha- and beta-D-glucopyranoside 6-phosphate, pNP-alpha-D-galactopyranoside 6-phosphate and oNP-beta-D-galactopyranoside 6-phosphate. This is Alpha-galacturonidase (lplD) from Bacillus subtilis (strain 168).